Consider the following 195-residue polypeptide: Imidazoleglycerol-phosphate dehydratase (195 aa).

This sequence belongs to the imidazoleglycerol-phosphate dehydratase family.

It localises to the cytoplasm. The enzyme catalyses D-erythro-1-(imidazol-4-yl)glycerol 3-phosphate = 3-(imidazol-4-yl)-2-oxopropyl phosphate + H2O. It participates in amino-acid biosynthesis; L-histidine biosynthesis; L-histidine from 5-phospho-alpha-D-ribose 1-diphosphate: step 6/9. This is Imidazoleglycerol-phosphate dehydratase from Burkholderia mallei (strain NCTC 10247).